The chain runs to 818 residues: SIT4-associating protein SAP4 (818 aa).

2 disordered regions span residues Glu-33–Ser-60 and Thr-499–Lys-526. Low complexity predominate over residues Asn-509–Asn-518.

It belongs to the SAPS family. Post-translationally, hyperphosphorylated in the absence of SIT4.

Functionally, associates with the SIT4 phosphatase in a cell cycle dependent manner. May be directly or indirectly involved in SIT4-dependent functions in budding and in normal G1 cyclin expression. In Saccharomyces cerevisiae (strain ATCC 204508 / S288c) (Baker's yeast), this protein is SIT4-associating protein SAP4 (SAP4).